The sequence spans 152 residues: ADP-ribose glycohydrolase OARD1 (152 aa).

Ala-2 carries the post-translational modification N-acetylalanine. The Macro domain maps to 2–152; that stretch reads AGSPNEDSEG…TDIRITVYTL (151 aa). At Ser-4 the chain carries Phosphoserine. Leu-21 serves as a coordination point for substrate. Catalysis depends on Lys-84, which acts as the Nucleophile. Residues 119–125 and Leu-152 contribute to the substrate site; that span reads RIGCGLD. The active-site Proton acceptor is the Asp-125.

It localises to the nucleus. The protein localises to the nucleoplasm. It is found in the nucleolus. Its subcellular location is the chromosome. The catalysed reaction is 2''-O-acetyl-ADP-D-ribose + H2O = ADP-D-ribose + acetate + H(+). The enzyme catalyses 5-O-(ADP-D-ribosyl)-L-glutamyl-[protein] + H2O = L-glutamyl-[protein] + ADP-D-ribose + H(+). It catalyses the reaction alpha-NAD(+) + H2O = ADP-D-ribose + nicotinamide + H(+). Its activity is regulated as follows. Subject to competitive inhibition by the product ADP-ribose. Functionally, ADP-ribose glycohydrolase that hydrolyzes ADP-ribose and acts on different substrates, such as proteins ADP-ribosylated on glutamate and O-acetyl-ADP-D-ribose. Specifically acts as a glutamate mono-ADP-ribosylhydrolase by mediating the removal of mono-ADP-ribose attached to glutamate residues on proteins. Does not act on poly-ADP-ribosylated proteins: the poly-ADP-ribose chain of poly-ADP-ribosylated glutamate residues must by hydrolyzed into mono-ADP-ribosylated glutamate by PARG to become a substrate for OARD1. Deacetylates O-acetyl-ADP ribose, a signaling molecule generated by the deacetylation of acetylated lysine residues in histones and other proteins. Catalyzes the deacylation of O-acetyl-ADP-ribose, O-propionyl-ADP-ribose and O-butyryl-ADP-ribose, yielding ADP-ribose plus acetate, propionate and butyrate, respectively. The protein is ADP-ribose glycohydrolase OARD1 of Bos taurus (Bovine).